Reading from the N-terminus, the 88-residue chain is Exodeoxyribonuclease 7 small subunit (88 aa).

The interval 69 to 88 is disordered; it reads DPMHPDDGEPFDPSLVSTSQ.

This sequence belongs to the XseB family. In terms of assembly, heterooligomer composed of large and small subunits.

The protein localises to the cytoplasm. It carries out the reaction Exonucleolytic cleavage in either 5'- to 3'- or 3'- to 5'-direction to yield nucleoside 5'-phosphates.. Its function is as follows. Bidirectionally degrades single-stranded DNA into large acid-insoluble oligonucleotides, which are then degraded further into small acid-soluble oligonucleotides. This chain is Exodeoxyribonuclease 7 small subunit, found in Xylella fastidiosa (strain M23).